The chain runs to 60 residues: Small, acid-soluble spore protein 1 (60 aa).

Belongs to the alpha/beta-type SASP family. In terms of processing, SASP are degraded in the first minutes of spore germination and provide amino acids for both new protein synthesis and metabolism.

In terms of biological role, SASP are bound to spore DNA. They are double-stranded DNA-binding proteins that cause DNA to change to an a-like conformation. They protect the DNA backbone from chemical and enzymatic cleavage and are thus involved in dormant spore's high resistance to UV light. The chain is Small, acid-soluble spore protein 1 (ssp1) from Clostridium perfringens (strain 13 / Type A).